Consider the following 65-residue polypeptide: Large ribosomal subunit protein uL29 (65 aa).

Belongs to the universal ribosomal protein uL29 family.

This chain is Large ribosomal subunit protein uL29, found in Natranaerobius thermophilus (strain ATCC BAA-1301 / DSM 18059 / JW/NM-WN-LF).